Here is a 190-residue protein sequence, read N- to C-terminus: 7-methyl-GTP pyrophosphatase (190 aa).

Aspartate 69 acts as the Proton acceptor in catalysis.

This sequence belongs to the Maf family. YceF subfamily. A divalent metal cation serves as cofactor.

The protein resides in the cytoplasm. It carries out the reaction N(7)-methyl-GTP + H2O = N(7)-methyl-GMP + diphosphate + H(+). Functionally, nucleoside triphosphate pyrophosphatase that hydrolyzes 7-methyl-GTP (m(7)GTP). May have a dual role in cell division arrest and in preventing the incorporation of modified nucleotides into cellular nucleic acids. This is 7-methyl-GTP pyrophosphatase from Xanthomonas axonopodis pv. citri (strain 306).